The primary structure comprises 591 residues: Probable acetolactate synthase large subunit (591 aa).

Thiamine diphosphate is bound at residue Glu47. FAD contacts are provided by residues Arg149, 258-279, and 301-320; these read HGTKAANYAVTECDVLIAIGCR and DIDPAEIGKNVRADIPIVGD. Residues 396 to 476 form a thiamine pyrophosphate binding region; sequence QNQMWMAHFF…VVICIFDNRT (81 aa). Mg(2+) is bound by residues Asp447 and Asn474.

Belongs to the TPP enzyme family. In terms of assembly, dimer of large and small chains. The cofactor is Mg(2+). It depends on thiamine diphosphate as a cofactor.

It catalyses the reaction 2 pyruvate + H(+) = (2S)-2-acetolactate + CO2. The protein operates within amino-acid biosynthesis; L-isoleucine biosynthesis; L-isoleucine from 2-oxobutanoate: step 1/4. Its pathway is amino-acid biosynthesis; L-valine biosynthesis; L-valine from pyruvate: step 1/4. This chain is Probable acetolactate synthase large subunit (ilvB), found in Methanocaldococcus jannaschii (strain ATCC 43067 / DSM 2661 / JAL-1 / JCM 10045 / NBRC 100440) (Methanococcus jannaschii).